A 326-amino-acid polypeptide reads, in one-letter code: L-lactate dehydrogenase (326 aa).

39–60 (DVVTGMPEGKALDDSQATSIAD) lines the NAD(+) pocket. Substrate contacts are provided by Arg-99, Asn-131, and Arg-162. Asn-131 is a binding site for NAD(+). The active-site Proton acceptor is the His-186.

This sequence belongs to the LDH/MDH superfamily. LDH family. Homotetramer.

It catalyses the reaction (S)-lactate + NAD(+) = pyruvate + NADH + H(+). Its pathway is fermentation; pyruvate fermentation to lactate; (S)-lactate from pyruvate: step 1/1. The chain is L-lactate dehydrogenase from Toxoplasma gondii.